The sequence spans 782 residues: cGMP-specific 3',5'-cyclic phosphodiesterase gamma (782 aa).

The Cytoplasmic segment spans residues 1-69 (MKHMFKNILF…LCDNMYSKKY (69 aa)). Residues 70–90 (VILVSHLISLLLMYSVCLIVG) traverse the membrane as a helical segment. Topologically, residues 91–97 (NINDLFS) are extracellular. A helical transmembrane segment spans residues 98–118 (VLKLTYILLHTFTAINIILIL). Residues 119-135 (TLHATHYVEMFKSIKGE) lie on the Cytoplasmic side of the membrane. The chain crosses the membrane as a helical span at residues 136 to 156 (IFIFYIMMIFVIWCSWLFILF). Residues 157–181 (NNIKDLLPIVVNVNNFLYATYANNK) are Extracellular-facing. Residues 182 to 202 (INIVLGFFAYLPIFYLITIIP) traverse the membrane as a helical segment. Residues 203 to 208 (CRICYS) lie on the Cytoplasmic side of the membrane. A helical transmembrane segment spans residues 209 to 229 (CAFDILFFIMKVAIFSVYYLI). The Extracellular segment spans residues 230–239 (TMKSYILTDN). Residues 240–260 (IFMIISALVGSLFIFVIRYII) form a helical membrane-spanning segment. Over 261 to 782 (EIQRRLSFHN…YAPNLNIYKL (522 aa)) the chain is Cytoplasmic. Positions 376–396 (GSKEEPEAESESECVDESKEG) are disordered. Over residues 381–390 (PEAESESECV) the composition is skewed to acidic residues. A PDEase domain is found at 423–751 (YEEKENEILK…SKWTKIEKDE (329 aa)). Histidine 504 serves as the catalytic Proton donor. A nucleoside 3',5'-cyclic phosphate is bound at residue 504–508 (HNSIH). Residues histidine 508, histidine 544, aspartate 545, and aspartate 654 each contribute to the a divalent metal cation site. Residues aspartate 545, aspartate 654, and glutamine 706 each contribute to the a nucleoside 3',5'-cyclic phosphate site.

Belongs to the cyclic nucleotide phosphodiesterase family. A divalent metal cation is required as a cofactor.

The protein resides in the membrane. It is found in the endoplasmic reticulum membrane. The enzyme catalyses 3',5'-cyclic GMP + H2O = GMP + H(+). The protein operates within purine metabolism; 3',5'-cyclic GMP degradation; GMP from 3',5'-cyclic GMP: step 1/1. Functionally, specifically hydrolyzes the second messenger cGMP, which is a key regulator of many important physiological processes. Probably by regulating cGMP levels, required for sporozoite motility and invasion of the mosquito salivary glands. This is cGMP-specific 3',5'-cyclic phosphodiesterase gamma from Plasmodium yoelii.